Reading from the N-terminus, the 355-residue chain is Serine endoprotease DegS (355 aa).

The Cytoplasmic portion of the chain corresponds to 1 to 4; the sequence is MFVK. A helical transmembrane segment spans residues 5–27; that stretch reads LLRSVAIGLIVGAILLVAMPSLR. Residues 28-355 are Periplasmic-facing; it reads SLNPLSTPQF…VTIQEYPATN (328 aa). Active-site charge relay system residues include His96 and Asp126. Thr184 provides a ligand contact to substrate. The active-site Charge relay system is the Ser201. 259–264 serves as a coordination point for substrate; it reads IGIGGR. Residues 281–326 enclose the PDZ domain; the sequence is GIVVNEVSPDGPAANAGIQVNDLIISVDNKPAISALETMDQVAEIR. Tyr351 contributes to the substrate binding site.

The protein belongs to the peptidase S1C family. Homotrimer.

It is found in the cell inner membrane. It carries out the reaction Acts on substrates that are at least partially unfolded. The cleavage site P1 residue is normally between a pair of hydrophobic residues, such as Val-|-Val.. With respect to regulation, allosterically activated by the C-terminus of exposed OMP peptides (consensus Tyr-X-Phe-COOH); cleavage only occurs in the presence of peptides. Inhibited when RseB is bound to RseA. In terms of biological role, a site-1 protease (S1P) that cleaves the peptide bond between 'Val-148' and 'Ser-149' in RseA. Part of a regulated intramembrane proteolysis (RIP) cascade. When heat shock or other environmental stresses disrupt protein folding in the periplasm, DegS senses the accumulation of unassembled outer membrane porins (OMP) and then initiates RseA (anti sigma-E factor) degradation by cleaving its periplasmic domain, making it a substrate for subsequent cleavage by RseP. This cascade ultimately leads to the sigma-E-driven expression of a variety of factors dealing with folding stress in the periplasm and OMP assembly. Required for basal and stress-induced degradation of RseA. The sequence is that of Serine endoprotease DegS (degS) from Escherichia coli O157:H7.